Consider the following 508-residue polypeptide: MKLAYWMYAGPAHIGTLRIASSFKNVHAIMHAPLGDDYFNVMRSMLERERDYTPVTTSVVDRHVLARGSQEKVVDNITRKDAEEHPDLIVLTPTCTSSILQEDLQNFVERAQLEAKGDVMLADVNHYRVNELQAADRTLQQIVQFYIAKARKQGNLVTEKTEKPSVNIFGMTTLGFHNNHDATELKKLMSDLGIEVNAIVPAGASVHELKSLPRAWFNLVPYRETGLLAAEFLQQEFNMPYVDITPIGIVETARCIRKIQQVINAQGANVDYEPFIDQQTRFVSQAAWFSRSIDCQNLTGKKAVVFGDNTHAAALTKILAREMGIHVLLAGTYCKYDEAWFREQVSEYCDDVLVSDDNGQIADAIARLEPAAIFGTQMERHVGKRLDIPCGVIAAPIHIQNFPVGYKPFVGYEGSNQIVDLIYNSFTLGMEDHLLEIFGGHDTKEVITKSVSADSDLNWSKDGLAELNRIPGFVRGKVKRNTEKFARDRNITQITAEVLYAAKEAVGA.

Asp-36 is a binding site for [4Fe-4S] cluster. Catalysis depends on Asp-294, which acts as the Proton donor. Residue 429-430 coordinates substrate; sequence GM.

It belongs to the ChlB/BchB/BchZ family. As to quaternary structure, protochlorophyllide reductase is composed of three subunits; ChlL, ChlN and ChlB. Forms a heterotetramer of two ChlB and two ChlN subunits. It depends on [4Fe-4S] cluster as a cofactor.

The enzyme catalyses chlorophyllide a + oxidized 2[4Fe-4S]-[ferredoxin] + 2 ADP + 2 phosphate = protochlorophyllide a + reduced 2[4Fe-4S]-[ferredoxin] + 2 ATP + 2 H2O. It participates in porphyrin-containing compound metabolism; chlorophyll biosynthesis (light-independent). In terms of biological role, component of the dark-operative protochlorophyllide reductase (DPOR) that uses Mg-ATP and reduced ferredoxin to reduce ring D of protochlorophyllide (Pchlide) to form chlorophyllide a (Chlide). This reaction is light-independent. The NB-protein (ChlN-ChlB) is the catalytic component of the complex. This chain is Light-independent protochlorophyllide reductase subunit B, found in Leptolyngbya boryana (Plectonema boryanum).